We begin with the raw amino-acid sequence, 182 residues long: Glycerol-3-phosphate acyltransferase 1 (182 aa).

5 helical membrane-spanning segments follow: residues 5–25 (MQFL…AYIV), 54–74 (GYFI…VAVA), 81–101 (PTFV…PVLF), 117–137 (IAFD…FYLI), and 157–177 (ILYS…VLIL).

The protein belongs to the PlsY family. In terms of assembly, probably interacts with PlsX.

It is found in the cell membrane. It catalyses the reaction an acyl phosphate + sn-glycerol 3-phosphate = a 1-acyl-sn-glycero-3-phosphate + phosphate. It participates in lipid metabolism; phospholipid metabolism. Its function is as follows. Catalyzes the transfer of an acyl group from acyl-phosphate (acyl-PO(4)) to glycerol-3-phosphate (G3P) to form lysophosphatidic acid (LPA). This enzyme utilizes acyl-phosphate as fatty acyl donor, but not acyl-CoA or acyl-ACP. The protein is Glycerol-3-phosphate acyltransferase 1 of Bacillus cereus (strain ATCC 14579 / DSM 31 / CCUG 7414 / JCM 2152 / NBRC 15305 / NCIMB 9373 / NCTC 2599 / NRRL B-3711).